Here is a 563-residue protein sequence, read N- to C-terminus: Germacrene-A synthase (563 aa).

Positions 316, 320, 461, and 469 each coordinate Mg(2+). A DDXXD motif motif is present at residues 316–320; the sequence is DDIYD.

This sequence belongs to the terpene synthase family. Tpsa subfamily. The cofactor is Mg(2+). Expressed in young leaves. Detected in trichomes and cones.

It carries out the reaction (2E,6E)-farnesyl diphosphate = (+)-(R)-germacrene A + diphosphate. Its pathway is secondary metabolite biosynthesis; terpenoid biosynthesis. Sesquiterpene synthase that catalyzes the formation of germacrene A. Can use farnesyl diphosphate as substrate, but not geranyl diphosphate or geranylgeranyl diphosphate. Beta-elemene, the initially measured product in the assay, is derived nonenzymatically from germacrene A. The chain is Germacrene-A synthase from Humulus lupulus (European hop).